The chain runs to 351 residues: Phospho-N-acetylmuramoyl-pentapeptide-transferase (351 aa).

The next 10 helical transmembrane spans lie at 17–37 (TAYATIFAFLLALIFGPFIIL), 63–83 (IPTMGGILIFFCVLVSLFFWI), 85–105 (FWNIYFLIILFVMVSFACLGF), 124–144 (FKIYGQILFSCISVTMLYYFG), 158–178 (SLKLDLGVLYIPFGMFILISA), 190–210 (GLAIGLSIVVTGALVIIAYLA), 230–250 (LVVFLGALLGGSFGFLWFNAY), 254–274 (IMMGDTGSLSIGAVLGMTALI), 279–299 (ILFAILAGVFVVETLSVIIQV), and 328–348 (QVVIRFWIIGLIFAIIALSTL).

Belongs to the glycosyltransferase 4 family. MraY subfamily. Mg(2+) is required as a cofactor.

It localises to the cell inner membrane. It carries out the reaction UDP-N-acetyl-alpha-D-muramoyl-L-alanyl-gamma-D-glutamyl-meso-2,6-diaminopimeloyl-D-alanyl-D-alanine + di-trans,octa-cis-undecaprenyl phosphate = di-trans,octa-cis-undecaprenyl diphospho-N-acetyl-alpha-D-muramoyl-L-alanyl-D-glutamyl-meso-2,6-diaminopimeloyl-D-alanyl-D-alanine + UMP. It functions in the pathway cell wall biogenesis; peptidoglycan biosynthesis. In terms of biological role, catalyzes the initial step of the lipid cycle reactions in the biosynthesis of the cell wall peptidoglycan: transfers peptidoglycan precursor phospho-MurNAc-pentapeptide from UDP-MurNAc-pentapeptide onto the lipid carrier undecaprenyl phosphate, yielding undecaprenyl-pyrophosphoryl-MurNAc-pentapeptide, known as lipid I. This is Phospho-N-acetylmuramoyl-pentapeptide-transferase from Borrelia turicatae (strain 91E135).